Consider the following 427-residue polypeptide: Glutamate-1-semialdehyde 2,1-aminomutase (427 aa).

Position 267 is an N6-(pyridoxal phosphate)lysine (K267).

It belongs to the class-III pyridoxal-phosphate-dependent aminotransferase family. HemL subfamily. In terms of assembly, homodimer. Requires pyridoxal 5'-phosphate as cofactor.

It is found in the cytoplasm. The enzyme catalyses (S)-4-amino-5-oxopentanoate = 5-aminolevulinate. Its pathway is porphyrin-containing compound metabolism; protoporphyrin-IX biosynthesis; 5-aminolevulinate from L-glutamyl-tRNA(Glu): step 2/2. The sequence is that of Glutamate-1-semialdehyde 2,1-aminomutase from Desulfosudis oleivorans (strain DSM 6200 / JCM 39069 / Hxd3) (Desulfococcus oleovorans).